We begin with the raw amino-acid sequence, 234 residues long: Biosynthetic peptidoglycan transglycosylase (234 aa).

The chain crosses the membrane as a helical span at residues 8–28; it reads VIGCFAAGVVALNLYFFAAIA.

It belongs to the glycosyltransferase 51 family.

The protein resides in the cell inner membrane. It catalyses the reaction [GlcNAc-(1-&gt;4)-Mur2Ac(oyl-L-Ala-gamma-D-Glu-L-Lys-D-Ala-D-Ala)](n)-di-trans,octa-cis-undecaprenyl diphosphate + beta-D-GlcNAc-(1-&gt;4)-Mur2Ac(oyl-L-Ala-gamma-D-Glu-L-Lys-D-Ala-D-Ala)-di-trans,octa-cis-undecaprenyl diphosphate = [GlcNAc-(1-&gt;4)-Mur2Ac(oyl-L-Ala-gamma-D-Glu-L-Lys-D-Ala-D-Ala)](n+1)-di-trans,octa-cis-undecaprenyl diphosphate + di-trans,octa-cis-undecaprenyl diphosphate + H(+). It participates in cell wall biogenesis; peptidoglycan biosynthesis. Its function is as follows. Peptidoglycan polymerase that catalyzes glycan chain elongation from lipid-linked precursors. In Ralstonia nicotianae (strain ATCC BAA-1114 / GMI1000) (Ralstonia solanacearum), this protein is Biosynthetic peptidoglycan transglycosylase.